The following is a 255-amino-acid chain: MDRVSERVERGHYIPVENQTESSTSRVTVEGRKLTYRMSVLQQPVRARACGQGAKCKSPSADRRPVDPPPIVELKIFEGEDQENDITFTMHANYFLFATLEQARPIANGRVSNERSTPVLTGTPVAGMVYLDRPTPAGYFIFPDLSVRHEGVYRLSFSLYEDCKSPKDEDKTEEGAKSESDAHVTHRLEVKSEPFNVFSAKKFPGLTESTSLSRMVAEQGCRVRIRRDVRMRKRETKPGGREWDNYEDETAQARA.

Residues 31–226 (GRKLTYRMSV…AEQGCRVRIR (196 aa)) form the Velvet domain. The Nuclear localization signal signature appears at 45–50 (VRARAC). Disordered stretches follow at residues 163-184 (CKSP…DAHV) and 229-255 (VRMR…QARA). Acidic residues predominate over residues 245-255 (NYEDETAQARA).

The protein belongs to the velvet family. VeA subfamily. As to quaternary structure, component of the heterotrimeric velvet complex composed of LAE1, MVE1 and VEL2; MVE1 acting as a bridging protein between LAE1 and VEL2.

It is found in the nucleus. It localises to the cytoplasm. Its function is as follows. Component of the velvet transcription factor complex that controls sexual/asexual developmental ratio in response to light, promoting sexual development in the darkness while stimulating asexual sporulation under illumination. The velvet complex hat acts as a global regulator for secondary metabolite gene expression. Controls the expression of the melanin gene cluster. Mediates the light-stimulated formation of aerial mycelia. The chain is Developmental and secondary metabolism regulator MVE1 from Zymoseptoria tritici (strain CBS 115943 / IPO323) (Speckled leaf blotch fungus).